A 561-amino-acid chain; its full sequence is Oligo-1,6-glucosidase (561 aa).

The active-site Nucleophile is aspartate 199. The active-site Proton donor is glutamate 256.

This sequence belongs to the glycosyl hydrolase 13 family.

The protein resides in the cytoplasm. It carries out the reaction Hydrolysis of (1-&gt;6)-alpha-D-glucosidic linkages in some oligosaccharides produced from starch and glycogen by alpha-amylase, and in isomaltose.. The chain is Oligo-1,6-glucosidase (malL) from Halalkalibacterium halodurans (strain ATCC BAA-125 / DSM 18197 / FERM 7344 / JCM 9153 / C-125) (Bacillus halodurans).